We begin with the raw amino-acid sequence, 471 residues long: Adenosylhomocysteinase (471 aa).

Positions 60, 135, and 196 each coordinate substrate. 197–199 (TTT) is a binding site for NAD(+). Residues K226 and D230 each coordinate substrate. NAD(+) contacts are provided by residues N231, 260 to 265 (GYGDVG), E283, N318, 339 to 341 (IGH), and N387.

This sequence belongs to the adenosylhomocysteinase family. NAD(+) serves as cofactor.

The protein localises to the cytoplasm. It carries out the reaction S-adenosyl-L-homocysteine + H2O = L-homocysteine + adenosine. Its pathway is amino-acid biosynthesis; L-homocysteine biosynthesis; L-homocysteine from S-adenosyl-L-homocysteine: step 1/1. May play a key role in the regulation of the intracellular concentration of adenosylhomocysteine. The chain is Adenosylhomocysteinase from Chlorobium luteolum (strain DSM 273 / BCRC 81028 / 2530) (Pelodictyon luteolum).